The primary structure comprises 308 residues: Putative cathepsin L 3 (308 aa).

The first 21 residues, 1 to 21, serve as a signal peptide directing secretion; it reads MKQFLTAAIVTLLMTAGYYHL. A propeptide spans 22-110 (activation peptide); sequence QEDDTNDFER…GASLPEVQLE (89 aa). 2 disulfides stabilise this stretch: Cys129-Cys170 and Cys254-Cys298. Residues His261 and Asn278 contribute to the active site.

It belongs to the peptidase C1 family.

The protein localises to the secreted. It catalyses the reaction Specificity close to that of papain. As compared to cathepsin B, cathepsin L exhibits higher activity toward protein substrates, but has little activity on Z-Arg-Arg-NHMec, and no peptidyl-dipeptidase activity.. May be involved in extracellular digestion. The sequence is that of Putative cathepsin L 3 from Paramecium tetraurelia.